Reading from the N-terminus, the 690-residue chain is Protein arginine N-methyltransferase 7 (690 aa).

SAM-dependent MTase PRMT-type domains are found at residues 5–355 and 364–690; these read FQDS…FSLW and KEPL…EEEQ.

Belongs to the class I-like SAM-binding methyltransferase superfamily. Protein arginine N-methyltransferase family. PRMT7 subfamily.

Essential arginine methyltransferase that can both catalyze the formation of omega-N monomethylarginine (MMA) and symmetrical dimethylarginine (sDMA). Specifically mediates the symmetrical dimethylation of arginine residues in the small nuclear ribonucleoproteins SmD1 and SmD3. This is Protein arginine N-methyltransferase 7 (Art7) from Anopheles gambiae (African malaria mosquito).